A 689-amino-acid chain; its full sequence is DNA ligase (689 aa).

Residues 40–44 (DAEYD), 89–90 (SL), and E121 contribute to the NAD(+) site. Residue K123 is the N6-AMP-lysine intermediate of the active site. NAD(+) is bound by residues R144, E179, K295, and K319. Residues C413, C416, C431, and C437 each contribute to the Zn(2+) site. Residues 610-689 (REQSSLTGKI…AEWLTLVRDI (80 aa)) enclose the BRCT domain.

This sequence belongs to the NAD-dependent DNA ligase family. LigA subfamily. Requires Mg(2+) as cofactor. It depends on Mn(2+) as a cofactor.

It catalyses the reaction NAD(+) + (deoxyribonucleotide)n-3'-hydroxyl + 5'-phospho-(deoxyribonucleotide)m = (deoxyribonucleotide)n+m + AMP + beta-nicotinamide D-nucleotide.. In terms of biological role, DNA ligase that catalyzes the formation of phosphodiester linkages between 5'-phosphoryl and 3'-hydroxyl groups in double-stranded DNA using NAD as a coenzyme and as the energy source for the reaction. It is essential for DNA replication and repair of damaged DNA. The polypeptide is DNA ligase (Rickettsia bellii (strain RML369-C)).